We begin with the raw amino-acid sequence, 571 residues long: S100P-binding protein (571 aa).

The segment covering 270-280 (SDIPFDGDIDE) has biased composition (acidic residues). Disordered stretches follow at residues 270 to 312 (SDIP…LESV) and 356 to 385 (NGQN…CSQS). Polar residues predominate over residues 299-309 (TSESTPASSEL). Residues 365 to 378 (PLPPSDTAPGPQLP) show a composition bias toward pro residues.

The protein localises to the nucleus. The polypeptide is S100P-binding protein (s100pbp) (Xenopus tropicalis (Western clawed frog)).